We begin with the raw amino-acid sequence, 690 residues long: Exonuclease GOR (690 aa).

2 disordered regions span residues 136-162 and 567-690; these read TRVA…NRSG and QPRH…SLHH. The span at 585 to 595 shows a compositional bias: polar residues; it reads APSTTAISPES. Positions 605 to 614 are enriched in basic and acidic residues; it reads KETGAVDGRR. The segment at 612–626 is GOR14-1 epitope; the sequence is GRRGQKAKSNPNRPL. A compositionally biased stretch (low complexity) spans 631-646; the sequence is NPCRGPSGLSPSLCPS. The segment covering 661–682 has biased composition (pro residues); it reads PPLPVPRVPAAPPRACPHPSAH.

It belongs to the REXO1/REXO3 family.

The protein resides in the cytoplasm. It is found in the nucleus. The polypeptide is Exonuclease GOR (REXO1L1) (Pan troglodytes (Chimpanzee)).